We begin with the raw amino-acid sequence, 381 residues long: Cobalt-precorrin-5B C(1)-methyltransferase (381 aa).

This sequence belongs to the CbiD family.

The catalysed reaction is Co-precorrin-5B + S-adenosyl-L-methionine = Co-precorrin-6A + S-adenosyl-L-homocysteine. The protein operates within cofactor biosynthesis; adenosylcobalamin biosynthesis; cob(II)yrinate a,c-diamide from sirohydrochlorin (anaerobic route): step 6/10. Functionally, catalyzes the methylation of C-1 in cobalt-precorrin-5B to form cobalt-precorrin-6A. The polypeptide is Cobalt-precorrin-5B C(1)-methyltransferase (Methylococcus capsulatus (strain ATCC 33009 / NCIMB 11132 / Bath)).